A 1290-amino-acid chain; its full sequence is Sorbin and SH3 domain-containing protein 1 (1290 aa).

3 disordered regions span residues 1–211 (MSSE…LSDV), 238–271 (HKLNRDDDSDVHSPRYSFSDDTKSPLSVPRSKSE), and 286–313 (TLPLPARSSSLKSSPERNDWEPLDKKVD). Residues 45–61 (SSSYRGTPSSSPVSPQE) are compositionally biased toward low complexity. Phosphothreonine is present on Thr-51. A phosphoserine mark is found at Ser-55, Ser-58, and Ser-62. Basic and acidic residues predominate over residues 62–71 (SPKHESKSGL). 2 stretches are compositionally biased toward polar residues: residues 83–95 (LSSSADTNGNAQP) and 123–153 (EVSSSHIETDSQDFPPTSRPSSAYPSTTIVN). Residues 161–173 (HNRDPASERRAGE) show a composition bias toward basic and acidic residues. A phosphoserine mark is found at Asp-164 and Asp-175. Position 179 is a phosphothreonine (Thr-179). Ser-185, Ala-194, Ser-204, Ser-209, Ser-254, Ser-261, Ser-270, and Pro-288 each carry phosphoserine. The span at 189–199 (ASERRAKDASR) shows a compositional bias: basic and acidic residues. A SoHo domain is found at 202–247 (VRSAQDLSDVSTDEVGIPLRNTERSKDWYKTMFKQIHKLNRDDDSD). The segment covering 240–260 (LNRDDDSDVHSPRYSFSDDTK) has biased composition (basic and acidic residues). A compositionally biased stretch (basic and acidic residues) spans 299 to 313 (SPERNDWEPLDKKVD). Residue Tyr-325 is modified to Phosphotyrosine; by ABL1. A phosphoserine mark is found at Ser-345, Pro-346, Tyr-357, Ser-376, and Ser-407. Residues 389–416 (VETVNKSPSANSPQSSAVSPTPDITSEP) are disordered. The span at 392 to 412 (VNKSPSANSPQSSAVSPTPDI) shows a compositional bias: polar residues. A Phosphotyrosine; by ABL1 modification is found at Tyr-421. A phosphoserine mark is found at Ser-432 and Ser-470. Disordered regions lie at residues 463-482 (LSGLKRPSSSASTKVDRKGG), 588-607 (YDSKSSSTMSLQEYGTSSRR), 697-739 (SLDF…EMDG), 783-803 (VSNDSREGSGGSVHGDFPKHR), 822-841 (RKHEQQSSRQSDWRSDSRGD), and 862-972 (PLQQ…SPRH). Residue Thr-475 is modified to Phosphothreonine. Polar residues-rich tracts occupy residues 595–606 (TMSLQEYGTSSR) and 704–722 (LSKSPTPVLSRSGLTSARS). Residue Ser-969 is modified to Phosphoserine. SH3 domains lie at 1049 to 1108 (LEMR…LLPP) and 1123 to 1184 (LEYG…VLKR). At Thr-1189 the chain carries Phosphothreonine. 2 positions are modified to phosphotyrosine: Tyr-1193 and Tyr-1198. A compositionally biased stretch (low complexity) spans 1198–1210 (YSSSPSRSATVSP). Positions 1198–1227 (YSSSPSRSATVSPQQPQAQQRRVTPDRSQP) are disordered. Phosphoserine occurs at positions 1201 and 1209. Over residues 1211–1227 (QQPQAQQRRVTPDRSQP) the composition is skewed to polar residues. An SH3 3 domain is found at 1229-1290 (LDLCSYQALY…PGNYVKPLYL (62 aa)). Tyr-1238 bears the Phosphotyrosine; by ABL1 mark.

As to quaternary structure, interacts (via SH3 domain 2) with PXN. Interacts with the long isoform of AFDN and with VCL. AFDN and VCL bind to SORBS1 in a competitive manner and do not form a ternary complex. Interacts with ABL1, CBL, CBLB and INPPL1/SHIP2 through the third SH3 domain. Interaction with ABL1 occurs only after insulin stimulation while this has no effect on the interaction with INPPL1. Interacts with the insulin receptor but dissociates from it following insulin stimulation. Also interacts with SCA7, PTK2/FAK1 and flotillin. Interacts (via third SH3 domain) with the Ten-1 ICD form of TENM1; the interaction induces the translocation of SORBS1 to the nucleus. Interacts with INSM1. In terms of processing, O-glycosylated. As to expression, expressed in all tissues tested: heart, brain, spleen, lung, liver, muscle, kidney and testis. Expressed in 3T3-L1 adipocytes but not in 3T3-L1 fibroblasts.

Its subcellular location is the cell junction. It is found in the adherens junction. The protein localises to the cell membrane. The protein resides in the cytoplasm. It localises to the cytoskeleton. Its subcellular location is the focal adhesion. It is found in the nucleus. The protein localises to the nucleus matrix. In terms of biological role, plays a role in tyrosine phosphorylation of CBL by linking CBL to the insulin receptor. Required for insulin-stimulated glucose transport. Involved in formation of actin stress fibers and focal adhesions. The chain is Sorbin and SH3 domain-containing protein 1 from Mus musculus (Mouse).